Consider the following 481-residue polypeptide: Probable zeta-carotene desaturase (481 aa).

The protein belongs to the zeta carotene desaturase family. Decylplastoquinone serves as cofactor. The cofactor is 6-decylubiquinone.

It carries out the reaction 9,9'-di-cis-zeta-carotene + 2 a quinone = 7,7',9,9'-tetra-cis-lycopene + 2 a quinol. It functions in the pathway carotenoid biosynthesis; lycopene biosynthesis. Its function is as follows. Catalyzes the conversion of zeta-carotene to lycopene via the intermediary of neurosporene. It carries out two consecutive desaturations (introduction of double bonds) at positions C-7 and C-7'. This Synechococcus elongatus (strain ATCC 33912 / PCC 7942 / FACHB-805) (Anacystis nidulans R2) protein is Probable zeta-carotene desaturase (zds).